Consider the following 809-residue polypeptide: MSTHPKFTRVPSIRDRVQDTLSAHRNELISLLSRYVAQGKGILQPHNLIDELDNILGEDHATLDLKNGPFGQIINSAQEAIVLPPFVAIAVRPRPGVWEYVRVNVFELSVEQLSVSEYLSFKEELVEGKSNDNIILELDLEPFNASFPRPTRSSSIGNGVQFLNRHLSSNMFRNKDCLEPLLDFLRVHTYKGHALMLNDRIQSISKLQSALVKAEDHLSKLAPDTLYSEFEYELQGTGFERGWGDTAARVLEMMHLLLDILQAPDPSTLETFLGRVPMVFNVVILSPHGFFGQANVLGLPDTGGQVVYILDQVRALESEMLVRIKKQGLDFTPRILIVTRLIPDAKGTTCNQRLERVSGTEYTHILRVPFRSEKGILRKWISRFDVWPFLETFAEDVASEIAAELQCYPDFIIGNYSDGNLVASLLAYKMGVTQCTIAHALEKTKYPDSDIYWKKFEDKYHFSCQFTADLIAMNNADFIITSTYQEIAGTKNTIGQYESHTAFTLPGLYRVVHGIDVFDPKFNIVSPGADMTIYFPYSDKEKRLTALHSSIEKLLYGTEQTDEYIGSLTDRSKPIIFSMARLDRVKNITGLVESYAKNSKLRELVNLVVVAGYIDVKKSSDREEIEEIEKMHDLMKQYNLNGEFRWITAQTNRARNGELYRYIADTKGAFVQPAFYEAFGLTVVEAMTCGLPTFATNHGGPAEIIEHGVSGFHIDPYHPDQASELLVDFFQRCKEDPNHWNKVSDGGLQRIYERYTWKIYSERLMTLAGVYSFWKYVSKLERRETRRYLEMFYILKFRDLANSVPIAKG.

The GT-B glycosyltransferase stretch occupies residues 278–756 (MVFNVVILSP…GLQRIYERYT (479 aa)).

Belongs to the glycosyltransferase 1 family. Plant sucrose synthase subfamily.

The enzyme catalyses an NDP-alpha-D-glucose + D-fructose = a ribonucleoside 5'-diphosphate + sucrose + H(+). Sucrose-cleaving enzyme that provides UDP-glucose and fructose for various metabolic pathways. This is Sucrose synthase 2 (SUS2) from Pisum sativum (Garden pea).